Here is a 253-residue protein sequence, read N- to C-terminus: Geranylgeranylglyceryl phosphate synthase (253 aa).

Positions 23 and 52 each coordinate Mg(2+). Sn-glycerol 1-phosphate-binding positions include 171–177, 202–203, and 224–225; these read YFEAGSG, GG, and GT.

The protein belongs to the GGGP/HepGP synthase family. Group II subfamily. As to quaternary structure, homodimer. The cofactor is Mg(2+).

Its subcellular location is the cytoplasm. It carries out the reaction sn-glycerol 1-phosphate + (2E,6E,10E)-geranylgeranyl diphosphate = sn-3-O-(geranylgeranyl)glycerol 1-phosphate + diphosphate. It functions in the pathway membrane lipid metabolism; glycerophospholipid metabolism. With respect to regulation, inhibited by high concentrations of magnesium (&gt;10 mM) and by EDTA in vitro. In terms of biological role, prenyltransferase that catalyzes the transfer of the geranylgeranyl moiety of geranylgeranyl diphosphate (GGPP) to the C3 hydroxyl of sn-glycerol-1-phosphate (G1P). This reaction is the first ether-bond-formation step in the biosynthesis of archaeal membrane lipids. Cannot use sn-glycerol-3-phosphate (G3P) as substrate. In Thermoplasma acidophilum (strain ATCC 25905 / DSM 1728 / JCM 9062 / NBRC 15155 / AMRC-C165), this protein is Geranylgeranylglyceryl phosphate synthase.